We begin with the raw amino-acid sequence, 351 residues long: dTDP-glucose 4,6-dehydratase (351 aa).

Residues 12 to 13 (FI), 32 to 35 (DALT), 58 to 59 (DI), 80 to 84 (FAAES), and threonine 99 contribute to the NAD(+) site. Substrate is bound at residue serine 84. Threonine 133 lines the substrate pocket. Aspartate 134 functions as the Proton donor in the catalytic mechanism. Active-site proton acceptor residues include glutamate 135 and tyrosine 158. Position 158-162 (158-162 (YSASK)) interacts with NAD(+). A substrate-binding site is contributed by asparagine 187. Asparagine 188 serves as a coordination point for NAD(+). Residues 197–198 (KL), 213–215 (PVY), arginine 222, asparagine 257, and 289–293 (DRPGH) contribute to the substrate site.

This sequence belongs to the NAD(P)-dependent epimerase/dehydratase family. dTDP-glucose dehydratase subfamily. In terms of assembly, homodimer. Requires NAD(+) as cofactor.

The enzyme catalyses dTDP-alpha-D-glucose = dTDP-4-dehydro-6-deoxy-alpha-D-glucose + H2O. It participates in carbohydrate biosynthesis; dTDP-L-rhamnose biosynthesis. It functions in the pathway bacterial outer membrane biogenesis; LPS O-antigen biosynthesis. Its function is as follows. Catalyzes the dehydration of dTDP-D-glucose to form dTDP-6-deoxy-D-xylo-4-hexulose via a three-step process involving oxidation, dehydration and reduction. This is dTDP-glucose 4,6-dehydratase (rfbB) from Xanthomonas campestris pv. campestris (strain B100).